The following is a 276-amino-acid chain: Release factor glutamine methyltransferase (276 aa).

Residues 117–121 (GTGTG), Asp-140, Trp-168, and Asn-182 each bind S-adenosyl-L-methionine. 182–185 (NPPY) lines the substrate pocket.

It belongs to the protein N5-glutamine methyltransferase family. PrmC subfamily.

The enzyme catalyses L-glutaminyl-[peptide chain release factor] + S-adenosyl-L-methionine = N(5)-methyl-L-glutaminyl-[peptide chain release factor] + S-adenosyl-L-homocysteine + H(+). Its function is as follows. Methylates the class 1 translation termination release factors RF1/PrfA and RF2/PrfB on the glutamine residue of the universally conserved GGQ motif. In Yersinia pestis, this protein is Release factor glutamine methyltransferase.